The primary structure comprises 386 residues: Innexin inx4 (386 aa).

Over 1–21 (MLEFVRPLQSILQIKQVNSTD) the chain is Cytoplasmic. The helical transmembrane segment at 22-42 (LVWRLHCRVTVFLLLLASLLL) threads the bilayer. Over 43–111 (SARQYFGNPI…ESERSYQKYY (69 aa)) the chain is Extracellular. Residues 112–132 (QWVVFILALQACMFSVPNFLW) form a helical membrane-spanning segment. At 133-187 (KAWEAGRLQSLCDGLTTPIVPDHWEKTRKKQLITYLSADFPRLHRTYLLRYCFCT) the chain is on the cytoplasmic side. A helical transmembrane segment spans residues 188 to 208 (LLNFCNVLLNIFLVNVIFSGF). Topologically, residues 209-272 (WSNYHPAVKA…LNVVNEKIFA (64 aa)) are extracellular. The helical transmembrane segment at 273 to 293 (FIWLWFLGLLVISMLNLLFWI) threads the bilayer. The Cytoplasmic segment spans residues 294–386 (VVLCSKGFRL…DPEGYDEEGV (93 aa)). Residues 358-386 (HNGHKTFRMPKGGEPDFYTDPEGYDEEGV) are disordered. A compositionally biased stretch (acidic residues) spans 374–386 (FYTDPEGYDEEGV).

It belongs to the pannexin family.

The protein localises to the cell membrane. It is found in the cell junction. It localises to the gap junction. Structural component of gap junctions. Required for normal development of ovary. Required for normal egg production after blood meal. Required for normal development of testis. Functionally, (Microbial infection) Modulates the development of Plasmodium falciparum oocysts. In Anopheles gambiae (African malaria mosquito), this protein is Innexin inx4.